The chain runs to 258 residues: Ribosomal RNA small subunit methyltransferase A (258 aa).

Positions 13, 15, 40, 61, 86, and 106 each coordinate S-adenosyl-L-methionine.

The protein belongs to the class I-like SAM-binding methyltransferase superfamily. rRNA adenine N(6)-methyltransferase family. RsmA subfamily.

Its subcellular location is the cytoplasm. It catalyses the reaction adenosine(1518)/adenosine(1519) in 16S rRNA + 4 S-adenosyl-L-methionine = N(6)-dimethyladenosine(1518)/N(6)-dimethyladenosine(1519) in 16S rRNA + 4 S-adenosyl-L-homocysteine + 4 H(+). Specifically dimethylates two adjacent adenosines (A1518 and A1519) in the loop of a conserved hairpin near the 3'-end of 16S rRNA in the 30S particle. May play a critical role in biogenesis of 30S subunits. In Coxiella burnetii (strain Dugway 5J108-111), this protein is Ribosomal RNA small subunit methyltransferase A.